A 287-amino-acid polypeptide reads, in one-letter code: Nucleotide-binding protein Asuc_0930 (287 aa).

Residue 8–15 participates in ATP binding; it reads GRSGAGKS. GTP is bound at residue 56 to 59; that stretch reads DIRN.

This sequence belongs to the RapZ-like family.

Its function is as follows. Displays ATPase and GTPase activities. The protein is Nucleotide-binding protein Asuc_0930 of Actinobacillus succinogenes (strain ATCC 55618 / DSM 22257 / CCUG 43843 / 130Z).